A 209-amino-acid polypeptide reads, in one-letter code: Large ribosomal subunit protein bL25 (209 aa).

Belongs to the bacterial ribosomal protein bL25 family. CTC subfamily. In terms of assembly, part of the 50S ribosomal subunit; part of the 5S rRNA/L5/L18/L25 subcomplex. Contacts the 5S rRNA. Binds to the 5S rRNA independently of L5 and L18.

In terms of biological role, this is one of the proteins that binds to the 5S RNA in the ribosome where it forms part of the central protuberance. This is Large ribosomal subunit protein bL25 from Chlorobium phaeobacteroides (strain BS1).